Consider the following 322-residue polypeptide: Mas-related G-protein coupled receptor member B5 (322 aa).

The Extracellular segment spans residues 1-34; the sequence is MGLTTPAWNINNTVVNGSNNTEHFSCVSKFNTLN. N-linked (GlcNAc...) asparagine glycosylation is found at Asn11, Asn16, and Asn19. The chain crosses the membrane as a helical span at residues 35 to 55; it reads FLTVIIAMFGLAGNAIVLWLL. At 56–70 the chain is on the cytoplasmic side; it reads AFHLPRNAFSVYVCN. A helical transmembrane segment spans residues 71-91; that stretch reads LACADFLQLCTQILGSLECFL. At 92 to 98 the chain is on the extracellular side; that stretch reads QLNRRHT. Residues 99–119 form a helical membrane-spanning segment; sequence FFLTVVFMFAYLAGLCMIAAI. Residues 120–147 are Cytoplasmic-facing; that stretch reads SVERSLSVMWPIWYHCQRPRHTSSIMCA. A helical transmembrane segment spans residues 148–168; that stretch reads LLWAFCLLLNFLLGEGCGLLF. Residues 169 to 172 are Extracellular-facing; that stretch reads SDPK. Residues 173–193 form a helical membrane-spanning segment; it reads YYFCITCALITTALIILLTVV. Over 194 to 216 the chain is Cytoplasmic; the sequence is PSVSSLALLVKMICGSHRIPVTR. A helical membrane pass occupies residues 217-237; sequence FYVTIALTLVVFIFLGLPFGI. Over 238-260 the chain is Extracellular; that stretch reads YSSFLIMFKEFQSIFSYHVLEVT. A helical transmembrane segment spans residues 261–281; the sequence is IFLSCVNSCANPIIYFLVGSI. At 282–322 the chain is on the cytoplasmic side; that stretch reads RQHRLQWQSLKLLLQRAMQDTPEEDSGERVPSQRSGELESV. A disordered region spans residues 302–322; that stretch reads TPEEDSGERVPSQRSGELESV.

This sequence belongs to the G-protein coupled receptor 1 family. Mas subfamily.

The protein resides in the membrane. Orphan receptor. Probably involved in the function of nociceptive neurons. May regulate nociceptor function and/or development, including the sensation or modulation of pain. This Mus musculus (Mouse) protein is Mas-related G-protein coupled receptor member B5 (Mrgprb5).